Consider the following 67-residue polypeptide: Large ribosomal subunit protein bL32 (67 aa).

The segment covering 1–19 (MAVPKRKMSRSNTRARRSQ) has biased composition (basic residues). The interval 1 to 21 (MAVPKRKMSRSNTRARRSQWK) is disordered.

This sequence belongs to the bacterial ribosomal protein bL32 family.

The polypeptide is Large ribosomal subunit protein bL32 (Arthrobacter sp. (strain FB24)).